We begin with the raw amino-acid sequence, 242 residues long: Biosynthetic peptidoglycan transglycosylase (242 aa).

A helical membrane pass occupies residues 19 to 39 (LMVVLAVFWGGGIALFSVAPV).

This sequence belongs to the glycosyltransferase 51 family.

Its subcellular location is the cell inner membrane. It catalyses the reaction [GlcNAc-(1-&gt;4)-Mur2Ac(oyl-L-Ala-gamma-D-Glu-L-Lys-D-Ala-D-Ala)](n)-di-trans,octa-cis-undecaprenyl diphosphate + beta-D-GlcNAc-(1-&gt;4)-Mur2Ac(oyl-L-Ala-gamma-D-Glu-L-Lys-D-Ala-D-Ala)-di-trans,octa-cis-undecaprenyl diphosphate = [GlcNAc-(1-&gt;4)-Mur2Ac(oyl-L-Ala-gamma-D-Glu-L-Lys-D-Ala-D-Ala)](n+1)-di-trans,octa-cis-undecaprenyl diphosphate + di-trans,octa-cis-undecaprenyl diphosphate + H(+). Its pathway is cell wall biogenesis; peptidoglycan biosynthesis. Functionally, peptidoglycan polymerase that catalyzes glycan chain elongation from lipid-linked precursors. The protein is Biosynthetic peptidoglycan transglycosylase of Escherichia coli (strain 55989 / EAEC).